A 254-amino-acid chain; its full sequence is MLRTRPRSPSADPAPCWSPQTPAPSPAKRRRLHQEPACPEPLAQPELEAPAEPTTSVVFLAAGSALQLPLDGVDLLLEPEPTSVLQVSLQGHTILLVPEGLQDSTHFGQPGFVAISPQGAAAQDGPQDHLVGLQEETFCEYFYQEDVCDEDADLEFLEHWASPPDDQANGNFSSIPGVPSPLSQDQVPGPSTGAEQYSPRFIWELDINMLGPFPGSPLQPLPPSPSRNPQEQLPPCPPCSPRAPRRARKRLVYE.

Disordered regions lie at residues Met1–Pro50, Ala161–Gln196, and Pro212–Glu254. Positions Glu35–Pro50 are enriched in low complexity. A compositionally biased stretch (pro residues) spans Pro214–Pro241. Positions Ala243 to Glu254 are enriched in basic residues.

The protein belongs to the PRR23 family.

The chain is Proline-rich protein 23A3 from Mus musculus (Mouse).